We begin with the raw amino-acid sequence, 476 residues long: MGLKKMKGLSYDEAFAMANDPLEGFHEVNLASPTSPDLLGVYESGTQEQTTSPSVIYRPHPSALSSVPIQANALDVSELPTQPVYSSPRRLNCAEISSISFHVTDPAPCSTSGVTAGLTKLTTRKDNYNAEREFLQGATITEACDGSDDIFGLSTDSLSRLRSPSVLEVREKGYERLKEELAKAQRELKLKDEECERLSKVRDQLGQELEELTASLFEEAHKMVREANIKQATAEKQLKEAQGKIDVLQAEVAALKTLVLSSSPTSPTQEPLPGGKTPFKKGHTRNKSTSSAMSGSHQDLSVIQPIVKDCKEADLSLYNEFRLWKDEPTMDRTCPFLDKIYQEDIFPCLTFSKSELASAVLEAVENNTLSIEPVGLQPIRFVKASAVECGGPKKCALTGQSKSCKHRIKLGDSSNYYYISPFCRYRITSVCNFFTYIRYIQQGLVKQQDVDQMFWEVMQLRKEMSLAKLGYFKEEL.

A phosphoserine; by PKB/AKT1 mark is found at Ser163 and Ser165. A coiled-coil region spans residues 165-260; the sequence is SVLEVREKGY…EVAALKTLVL (96 aa). The disordered stretch occupies residues 262-297; that stretch reads SSPTSPTQEPLPGGKTPFKKGHTRNKSTSSAMSGSH. Phosphoserine occurs at positions 263, 266, 288, and 296. Residues 287 to 297 show a composition bias toward polar residues; the sequence is KSTSSAMSGSH. Residues 435–444 are important for RAB11A binding; that stretch reads TYIRYIQQGL.

It belongs to the SEC2 family. Homodimer. Interacts with the N-terminal region of SSX2. Interacts with the GDP-bound forms of RAB8A and RAB8B. The interaction with RAB8A is prevented by phosphorylation of RAB8A at 'Thr-72'. Interacts with the GDP-bound forms of RAB3A and RAB3D. Interacts with DCDC1. Interacts (via the N-terminal region) with TRAPPC14; this interaction mediates RAB3IP association with the TRAPP II complex. Forms a heterotetramer with RAB11A where RAB3IP homodimer binds two RAB11A subunits. Forms a complex with RAB11A and RAB11FIP3, probably a heterohexamer with two of each protein subunit, where Rabin8/RAB3IP and RAB11FIP3 simultaneously bind to RAB11A; the complex promotes preciliary trafficking. Forms a complex containing RAB11A, ASAP1, RAB3IP, RAP11FIP3 and ARF4; the complex promotes preciliary trafficking; the complex binds to RHO in photoreceptor cells and promotes RHO ciliary transport. Post-translationally, phosphorylated by AKT1; the phosphorylation alters its GEF activity. In terms of tissue distribution, expressed in brain, kidney, heart, pancreas and placenta. Not detected in skeletal muscle or liver.

It is found in the cytoplasm. Its subcellular location is the nucleus. The protein resides in the cytoskeleton. It localises to the cell projection. The protein localises to the lamellipodium. It is found in the vesicle. Its subcellular location is the microtubule organizing center. The protein resides in the centrosome. Its activity is regulated as follows. Phosphorylation by ATK1 alters its GEF activity. Complex formation with RAB11A and RAB11FIP3 and ciliogenesis function are competitively inhibited by RAB11A-WDR44 interaction. In terms of biological role, guanine nucleotide exchange factor (GEF) which may activate RAB8A and RAB8B. Promotes the exchange of GDP to GTP, converting inactive GDP-bound Rab proteins into their active GTP-bound form. Mediates the release of GDP from RAB8A and RAB8B but not from RAB3A or RAB5. Modulates actin organization and promotes polarized transport of RAB8A-specific vesicles to the cell surface. Together with RAB11A, RAB8A, the exocyst complex, PARD3, PRKCI, ANXA2, CDC42 and DNMBP promotes transcytosis of PODXL to the apical membrane initiation sites (AMIS), apical surface formation and lumenogenesis. Part of the ciliary targeting complex containing Rab11, ASAP1, RAB3IP and RAB11FIP3 and ARF4 that promotes RAB3IP preciliary vesicle trafficking to mother centriole and ciliogenesis initiation. The polypeptide is Rab-3A-interacting protein (Homo sapiens (Human)).